Reading from the N-terminus, the 212-residue chain is ATP-dependent dethiobiotin synthetase BioD (212 aa).

13–18 (GVGKTV) lines the ATP pocket. Residue Thr17 participates in Mg(2+) binding. Lys33 is an active-site residue. Residue Glu100 coordinates Mg(2+). ATP-binding positions include 100–103 (EGAG) and 184–186 (PHL).

This sequence belongs to the dethiobiotin synthetase family. Homodimer. Requires Mg(2+) as cofactor.

The protein resides in the cytoplasm. It carries out the reaction (7R,8S)-7,8-diammoniononanoate + CO2 + ATP = (4R,5S)-dethiobiotin + ADP + phosphate + 3 H(+). It functions in the pathway cofactor biosynthesis; biotin biosynthesis; biotin from 7,8-diaminononanoate: step 1/2. Catalyzes a mechanistically unusual reaction, the ATP-dependent insertion of CO2 between the N7 and N8 nitrogen atoms of 7,8-diaminopelargonic acid (DAPA, also called 7,8-diammoniononanoate) to form a ureido ring. This is ATP-dependent dethiobiotin synthetase BioD from Rhodopseudomonas palustris (strain BisB5).